Consider the following 695-residue polypeptide: Tail-specific protease (695 aa).

Residues 1–29 form the signal peptide; sequence MVMKFKMSKNVICYTWLSVCLSSAIPAFA. The region spanning 256-316 is the PDZ domain; it reads IGTTLQSEDD…RLEDLVEKIK (61 aa). Catalysis depends on charge relay system residues Ser-459, Asp-470, and Lys-484.

This sequence belongs to the peptidase S41A family.

Its subcellular location is the cell inner membrane. It catalyses the reaction The enzyme shows specific recognition of a C-terminal tripeptide, Xaa-Yaa-Zaa, in which Xaa is preferably Ala or Leu, Yaa is preferably Ala or Tyr, and Zaa is preferably Ala, but then cleaves at a variable distance from the C-terminus. A typical cleavage is -Ala-Ala-|-Arg-Ala-Ala-Lys-Glu-Asn-Tyr-Ala-Leu-Ala-Ala.. Involved in the cleavage of a C-terminal peptide of 11 residues from the precursor form of penicillin-binding protein 3 (PBP3). May be involved in protection of the bacterium from thermal and osmotic stresses. This is Tail-specific protease (prc) from Haemophilus influenzae (strain ATCC 51907 / DSM 11121 / KW20 / Rd).